The chain runs to 172 residues: MATSTERAVLAGGCFWGMQDLIRRYPGVISTRVGYSGGDVANATYRNHGTHAEAIEINFDPAVISYRTLLERFFQIHDPTTRNRQGNDVGMSYRSAIYYTSDEQKRVAEDTIADVDASGLWPGKVVTEVAPAGAFWEAEPEHQDYLEKYPNGYTCHFVRPGWKLPVREKAVS.

The active site involves Cys14.

Belongs to the MsrA Met sulfoxide reductase family.

The catalysed reaction is L-methionyl-[protein] + [thioredoxin]-disulfide + H2O = L-methionyl-(S)-S-oxide-[protein] + [thioredoxin]-dithiol. The enzyme catalyses [thioredoxin]-disulfide + L-methionine + H2O = L-methionine (S)-S-oxide + [thioredoxin]-dithiol. Its function is as follows. Has an important function as a repair enzyme for proteins that have been inactivated by oxidation. Catalyzes the reversible oxidation-reduction of methionine sulfoxide in proteins to methionine. In Mesorhizobium japonicum (strain LMG 29417 / CECT 9101 / MAFF 303099) (Mesorhizobium loti (strain MAFF 303099)), this protein is Peptide methionine sulfoxide reductase MsrA 1 (msrA1).